Reading from the N-terminus, the 96-residue chain is (4S)-4-hydroxy-5-phosphonooxypentane-2,3-dione isomerase (96 aa).

An ABM domain is found at 2-91 (HVTLVEINVH…MTGPRKKRLF (90 aa)).

It belongs to the LsrG family. As to quaternary structure, homodimer.

It is found in the cytoplasm. It catalyses the reaction (2S)-2-hydroxy-3,4-dioxopentyl phosphate = 3-hydroxy-2,4-dioxopentyl phosphate. Involved in the degradation of phospho-AI-2, thereby terminating induction of the lsr operon and closing the AI-2 signaling cycle. Catalyzes the conversion of (4S)-4-hydroxy-5-phosphonooxypentane-2,3-dione (P-DPD) to 3-hydroxy-5-phosphonooxypentane-2,4-dione (P-HPD). The sequence is that of (4S)-4-hydroxy-5-phosphonooxypentane-2,3-dione isomerase from Escherichia coli O9:H4 (strain HS).